The following is a 337-amino-acid chain: D-lactate dehydrogenase (337 aa).

NAD(+) is bound by residues 156–157 (HI), aspartate 176, 207–208 (VP), asparagine 213, 234–236 (CSR), and aspartate 260. The active site involves arginine 236. The active site involves glutamate 265. The active-site Proton donor is the histidine 297.

Belongs to the D-isomer specific 2-hydroxyacid dehydrogenase family. As to quaternary structure, homodimer.

It catalyses the reaction (R)-lactate + NAD(+) = pyruvate + NADH + H(+). The sequence is that of D-lactate dehydrogenase from Lactobacillus helveticus (Lactobacillus suntoryeus).